The primary structure comprises 341 residues: Phosphoribosylformylglycinamidine cyclo-ligase (341 aa).

It belongs to the AIR synthase family.

It localises to the cytoplasm. The enzyme catalyses 2-formamido-N(1)-(5-O-phospho-beta-D-ribosyl)acetamidine + ATP = 5-amino-1-(5-phospho-beta-D-ribosyl)imidazole + ADP + phosphate + H(+). Its pathway is purine metabolism; IMP biosynthesis via de novo pathway; 5-amino-1-(5-phospho-D-ribosyl)imidazole from N(2)-formyl-N(1)-(5-phospho-D-ribosyl)glycinamide: step 2/2. The polypeptide is Phosphoribosylformylglycinamidine cyclo-ligase (Alkaliphilus oremlandii (strain OhILAs) (Clostridium oremlandii (strain OhILAs))).